The following is a 1214-amino-acid chain: Receptor-type guanylate cyclase gcy-19 (1214 aa).

Residues methionine 1 to alanine 18 form the signal peptide. Residues glutamine 19–alanine 517 lie on the Extracellular side of the membrane. N-linked (GlcNAc...) asparagine glycosylation is found at asparagine 85, asparagine 363, asparagine 441, and asparagine 464. The helical transmembrane segment at leucine 518–phenylalanine 538 threads the bilayer. Topologically, residues tyrosine 539–methionine 1214 are cytoplasmic. Positions arginine 572–asparagine 859 constitute a Protein kinase domain. One can recognise a Guanylate cyclase domain in the interval threonine 917–glutamate 1047. The disordered stretch occupies residues asparagine 1116–glutamate 1197. Residues aspartate 1133–serine 1142 show a composition bias toward acidic residues. Positions leucine 1186 to glutamate 1197 are enriched in basic and acidic residues.

Belongs to the adenylyl cyclase class-4/guanylyl cyclase family. In terms of tissue distribution, expressed asymmetrically in ASE right (ASER) sensory neuron.

The protein resides in the cell membrane. It catalyses the reaction GTP = 3',5'-cyclic GMP + diphosphate. Guanylate cyclase involved in the production of the second messenger cGMP. This chain is Receptor-type guanylate cyclase gcy-19, found in Caenorhabditis briggsae.